The following is a 450-amino-acid chain: Ribulose bisphosphate carboxylase large chain (450 aa).

At Lys-4 the chain carries N6,N6,N6-trimethyllysine. Residues Asn-113 and Thr-163 each contribute to the substrate site. Residue Lys-165 is the Proton acceptor of the active site. Position 167 (Lys-167) interacts with substrate. Lys-191, Asp-193, and Glu-194 together coordinate Mg(2+). Lys-191 carries the N6-carboxylysine modification. The Proton acceptor role is filled by His-284. Substrate-binding residues include Arg-285, His-317, and Ser-369.

Belongs to the RuBisCO large chain family. Type I subfamily. As to quaternary structure, heterohexadecamer of 8 large chains and 8 small chains; disulfide-linked. The disulfide link is formed within the large subunit homodimers. The cofactor is Mg(2+). The disulfide bond which can form in the large chain dimeric partners within the hexadecamer appears to be associated with oxidative stress and protein turnover.

Its subcellular location is the plastid. The protein resides in the chloroplast. It carries out the reaction 2 (2R)-3-phosphoglycerate + 2 H(+) = D-ribulose 1,5-bisphosphate + CO2 + H2O. The enzyme catalyses D-ribulose 1,5-bisphosphate + O2 = 2-phosphoglycolate + (2R)-3-phosphoglycerate + 2 H(+). Functionally, ruBisCO catalyzes two reactions: the carboxylation of D-ribulose 1,5-bisphosphate, the primary event in carbon dioxide fixation, as well as the oxidative fragmentation of the pentose substrate in the photorespiration process. Both reactions occur simultaneously and in competition at the same active site. The polypeptide is Ribulose bisphosphate carboxylase large chain (Crassula rupestris subsp. marnieriana (Pygmyweed)).